A 157-amino-acid chain; its full sequence is Protein Smg homolog (157 aa).

Belongs to the Smg family.

In Shewanella piezotolerans (strain WP3 / JCM 13877), this protein is Protein Smg homolog.